The primary structure comprises 127 residues: Aspartate 1-decarboxylase (127 aa).

The active-site Schiff-base intermediate with substrate; via pyruvic acid is the serine 25. Residue serine 25 is modified to Pyruvic acid (Ser). Threonine 57 contacts substrate. Tyrosine 58 (proton donor) is an active-site residue. A substrate-binding site is contributed by glycine 73–alanine 75.

Belongs to the PanD family. In terms of assembly, heterooctamer of four alpha and four beta subunits. The cofactor is pyruvate. Is synthesized initially as an inactive proenzyme, which is activated by self-cleavage at a specific serine bond to produce a beta-subunit with a hydroxyl group at its C-terminus and an alpha-subunit with a pyruvoyl group at its N-terminus.

It localises to the cytoplasm. The catalysed reaction is L-aspartate + H(+) = beta-alanine + CO2. It functions in the pathway cofactor biosynthesis; (R)-pantothenate biosynthesis; beta-alanine from L-aspartate: step 1/1. Catalyzes the pyruvoyl-dependent decarboxylation of aspartate to produce beta-alanine. This is Aspartate 1-decarboxylase from Clostridium botulinum (strain Okra / Type B1).